The following is a 476-amino-acid chain: Probable flippase AglR (476 aa).

14 helical membrane-spanning segments follow: residues 7–29, 34–56, 83–103, 112–132, 146–166, 168–188, 222–242, 246–266, 287–307, 310–330, 354–373, 377–396, 409–429, and 439–459; these read ASALQFGANVTQTFVGAIITIYV, GVGAFGIFALSAALVKWASIPAV, VLTGAIILVGLLALLGYSPFV, TQLVGGMFVSNVSFRLVLGGL, ALWGILSSLVKLALVYTGVGV, ALFYGEITSSIVIGIFGVYSL, WLDTIILGFFVSTSLVGIYEV, ISALFVLLPTAISKSTFPTIS, VAGVLAIPGLVGSVLVGGDIL, YGPSVSSVGVAVSVLVSLSVV, FRIGVIFITTNIILNVSLIP, VIGAAIATLLSMTLGSILAV, VSAIGSQFVSAGAMAVVLFTI, and IEVVLYVLAGATTYGFVLLSL.

Belongs to the AglR/Agl15 family.

It is found in the cell membrane. The protein operates within cell surface structure biogenesis; S-layer biogenesis. Its function is as follows. Involved in the assembly of a N-linked pentasaccharide that decorates the S-layer glycoprotein and flagellins. Probably mediates or contributes to the translocation of the dolichol-phosphate-mannose across the membrane. This chain is Probable flippase AglR (aglR), found in Haloferax volcanii (strain ATCC 29605 / DSM 3757 / JCM 8879 / NBRC 14742 / NCIMB 2012 / VKM B-1768 / DS2) (Halobacterium volcanii).